A 542-amino-acid polypeptide reads, in one-letter code: MARYVFITGGVVSSLGKGIAAAALGALLQARGYRVRLRKLDPYLNVDPGTMSPTQHGEVFVTDDGAETDLDLGHYERFTGRSATKTDNITTGRIYKNIIDKERRGDYLGATVQVIPHVTNEIKDFVTEGNKDYDFVICEIGGTVGDIEAMPFMEAIRQLGNDLPRGTAVYVHLTLMPYIPAAGELKTKPTQHSVKELQALGIHPDILLVRADREIPEAERRKLSLFCNVRPSAVIQALDVANIYDVPMAYHKEGLDDEVLAAFGIEPAPKPRLDQWEEVCNRIRTPEGEVTIAIVGKYTGLKDAYKSLIEALHHGGIANRVKVKLEWIESEVFEKEDPAPYLEKVHGILVPGGFGERGSEGKIHAARFARERKVPYFGICFGMQMAVIEAARNLADVPDASSTEFGPAKEPVVGLMTEWVKGNELQKRTAAGDLGGTMRLGAYKAALKKGTKISEIYGSTDISERHRHRYEVNIDYKDRLESCGLVFSGMSPDGVLPETIEYPDHPWFIGVQYHPELKSRPLDPHPLFASFIEAATEQSRLV.

The segment at 1 to 265 (MARYVFITGG…DDEVLAAFGI (265 aa)) is amidoligase domain. Position 13 (Ser-13) interacts with CTP. Ser-13 lines the UTP pocket. Residues 14 to 19 (SLGKGI) and Asp-71 contribute to the ATP site. 2 residues coordinate Mg(2+): Asp-71 and Glu-139. Residues 146–148 (DIE), 186–191 (KTKPTQ), and Lys-222 contribute to the CTP site. UTP contacts are provided by residues 186–191 (KTKPTQ) and Lys-222. The Glutamine amidotransferase type-1 domain occupies 291–541 (TIAIVGKYTG…IEAATEQSRL (251 aa)). Gly-353 contacts L-glutamine. The Nucleophile; for glutamine hydrolysis role is filled by Cys-380. L-glutamine contacts are provided by residues 381–384 (FGMQ), Glu-404, and Arg-469. Catalysis depends on residues His-514 and Glu-516.

Belongs to the CTP synthase family. Homotetramer.

It catalyses the reaction UTP + L-glutamine + ATP + H2O = CTP + L-glutamate + ADP + phosphate + 2 H(+). The catalysed reaction is L-glutamine + H2O = L-glutamate + NH4(+). The enzyme catalyses UTP + NH4(+) + ATP = CTP + ADP + phosphate + 2 H(+). Its pathway is pyrimidine metabolism; CTP biosynthesis via de novo pathway; CTP from UDP: step 2/2. Allosterically activated by GTP, when glutamine is the substrate; GTP has no effect on the reaction when ammonia is the substrate. The allosteric effector GTP functions by stabilizing the protein conformation that binds the tetrahedral intermediate(s) formed during glutamine hydrolysis. Inhibited by the product CTP, via allosteric rather than competitive inhibition. Functionally, catalyzes the ATP-dependent amination of UTP to CTP with either L-glutamine or ammonia as the source of nitrogen. Regulates intracellular CTP levels through interactions with the four ribonucleotide triphosphates. The polypeptide is CTP synthase (Rhizobium etli (strain CIAT 652)).